Consider the following 128-residue polypeptide: Small ribosomal subunit protein uS9 (128 aa).

Belongs to the universal ribosomal protein uS9 family. Part of the 30S ribosomal subunit. Contacts proteins S7 and S10.

Part of the top of the head of the 30S subunit. The C-terminal region penetrates the head emerging in the P-site where it contacts tRNA. The polypeptide is Small ribosomal subunit protein uS9 (rpsI) (Thermus thermophilus (strain ATCC BAA-163 / DSM 7039 / HB27)).